We begin with the raw amino-acid sequence, 615 residues long: Dihydroxy-acid dehydratase (615 aa).

Asp-81 contributes to the Mg(2+) binding site. Cys-122 contributes to the [2Fe-2S] cluster binding site. Residues Asp-123 and Lys-124 each coordinate Mg(2+). N6-carboxylysine is present on Lys-124. Cys-195 is a binding site for [2Fe-2S] cluster. Glu-491 contributes to the Mg(2+) binding site. The active-site Proton acceptor is Ser-517.

The protein belongs to the IlvD/Edd family. In terms of assembly, homodimer. The cofactor is [2Fe-2S] cluster. Mg(2+) is required as a cofactor.

It catalyses the reaction (2R)-2,3-dihydroxy-3-methylbutanoate = 3-methyl-2-oxobutanoate + H2O. It carries out the reaction (2R,3R)-2,3-dihydroxy-3-methylpentanoate = (S)-3-methyl-2-oxopentanoate + H2O. The protein operates within amino-acid biosynthesis; L-isoleucine biosynthesis; L-isoleucine from 2-oxobutanoate: step 3/4. Its pathway is amino-acid biosynthesis; L-valine biosynthesis; L-valine from pyruvate: step 3/4. In terms of biological role, functions in the biosynthesis of branched-chain amino acids. Catalyzes the dehydration of (2R,3R)-2,3-dihydroxy-3-methylpentanoate (2,3-dihydroxy-3-methylvalerate) into 2-oxo-3-methylpentanoate (2-oxo-3-methylvalerate) and of (2R)-2,3-dihydroxy-3-methylbutanoate (2,3-dihydroxyisovalerate) into 2-oxo-3-methylbutanoate (2-oxoisovalerate), the penultimate precursor to L-isoleucine and L-valine, respectively. The polypeptide is Dihydroxy-acid dehydratase (Shewanella pealeana (strain ATCC 700345 / ANG-SQ1)).